A 181-amino-acid polypeptide reads, in one-letter code: Adenylate kinase (181 aa).

Residue 10–15 (GAGKGT) participates in ATP binding. Positions 30 to 59 (STGDLFRANIGEGTPLGKEAKSYIDAGKLV) are NMP. AMP is bound by residues Thr-31, Arg-36, 57 to 59 (KLV), 85 to 88 (GFPR), and Gln-92. The interval 126 to 132 (ARGRADD) is LID. Residue Arg-127 coordinates ATP. The AMP site is built by Arg-129 and Arg-140. Gly-166 provides a ligand contact to ATP.

The protein belongs to the adenylate kinase family. In terms of assembly, monomer.

Its subcellular location is the cytoplasm. It carries out the reaction AMP + ATP = 2 ADP. The protein operates within purine metabolism; AMP biosynthesis via salvage pathway; AMP from ADP: step 1/1. Functionally, catalyzes the reversible transfer of the terminal phosphate group between ATP and AMP. Plays an important role in cellular energy homeostasis and in adenine nucleotide metabolism. The sequence is that of Adenylate kinase from Corynebacterium diphtheriae (strain ATCC 700971 / NCTC 13129 / Biotype gravis).